A 726-amino-acid polypeptide reads, in one-letter code: Catalase-peroxidase (726 aa).

Positions 1-33 (MSTSDDIHNTTATGKCPFHQGGHDQSAGAGTTT) are disordered. A cross-link (tryptophyl-tyrosyl-methioninium (Trp-Tyr) (with M-252)) is located at residues 105-226 (WHGAGTYRSI…LGATEMGLIY (122 aa)). Catalysis depends on His106, which acts as the Proton acceptor. Residues 226–252 (YVNPEGPDHSGEPLSAAAAIRATFGNM) constitute a cross-link (tryptophyl-tyrosyl-methioninium (Tyr-Met) (with W-105)). His267 provides a ligand contact to heme b.

The protein belongs to the peroxidase family. Peroxidase/catalase subfamily. In terms of assembly, homodimer or homotetramer. Requires heme b as cofactor. Formation of the three residue Trp-Tyr-Met cross-link is important for the catalase, but not the peroxidase activity of the enzyme.

It carries out the reaction H2O2 + AH2 = A + 2 H2O. The catalysed reaction is 2 H2O2 = O2 + 2 H2O. In terms of biological role, bifunctional enzyme with both catalase and broad-spectrum peroxidase activity. The chain is Catalase-peroxidase from Shigella boydii serotype 18 (strain CDC 3083-94 / BS512).